Here is a 203-residue protein sequence, read N- to C-terminus: Xrcc4-like factor 1 (203 aa).

Belongs to the XRCC4-XLF family. XLF subfamily.

The protein localises to the nucleus. Functionally, involved in double-strand break repair via non-homologous end joining (NHEJ); the repair of a double-strand break in DNA in which the two broken ends are rejoined with little or no sequence complementarity. Has a role in meiosis. The polypeptide is Xrcc4-like factor 1 (xlf1) (Schizosaccharomyces pombe (strain 972 / ATCC 24843) (Fission yeast)).